A 500-amino-acid polypeptide reads, in one-letter code: Trans-cinnamate 4-monooxygenase (500 aa).

A helical transmembrane segment spans residues A3–V23. (E)-cinnamate contacts are provided by residues R213–Q218 and A302. C442 serves as a coordination point for heme.

This sequence belongs to the cytochrome P450 family. It depends on heme as a cofactor. In terms of tissue distribution, expressed in roots and leaves.

It is found in the membrane. It catalyses the reaction (E)-cinnamate + reduced [NADPH--hemoprotein reductase] + O2 = (E)-4-coumarate + oxidized [NADPH--hemoprotein reductase] + H2O + H(+). Its pathway is phenylpropanoid metabolism; trans-4-coumarate biosynthesis; trans-4-coumarate from trans-cinnamate: step 1/1. Functionally, catalyzes the first oxidative step of the phenylpropanoid pathway in higher plants by transforming trans-cinnamate into p-coumarate. The compounds formed by this pathway are essential components for lignification, pollination, and defense against ultraviolet light, predators and pathogens. In Oryza sativa subsp. japonica (Rice), this protein is Trans-cinnamate 4-monooxygenase.